A 268-amino-acid chain; its full sequence is Fibroblast growth factor 5 (268 aa).

An N-terminal signal peptide occupies residues 1 to 20 (MSLSFLLLLFFSHLILSAWA). The disordered stretch occupies residues 26–81 (LAPKGQPGPAATDRNPRGSSSRQSSSSAMSSSSASSSPAASLGSQGSGLEQSSFQW). Positions 43 to 80 (GSSSRQSSSSAMSSSSASSSPAASLGSQGSGLEQSSFQ) are enriched in low complexity. Residue N110 is glycosylated (N-linked (GlcNAc...) asparagine). Positions 233–255 (VPEKKKPPSPIKPKIPLSAPRKN) are disordered.

This sequence belongs to the heparin-binding growth factors family. In terms of assembly, interacts with FGFR1 and FGFR2. Affinity between fibroblast growth factors (FGFs) and their receptors is increased by heparan sulfate glycosaminoglycans that function as coreceptors. As to expression, expressed in neonatal brain.

It is found in the secreted. Its function is as follows. Plays an important role in the regulation of cell proliferation and cell differentiation. Required for normal regulation of the hair growth cycle. Functions as an inhibitor of hair elongation by promoting progression from anagen, the growth phase of the hair follicle, into catagen the apoptosis-induced regression phase. This is Fibroblast growth factor 5 (FGF5) from Homo sapiens (Human).